A 106-amino-acid chain; its full sequence is UPF0473 protein LSEI_0788 (106 aa).

It belongs to the UPF0473 family.

In Lacticaseibacillus paracasei (strain ATCC 334 / BCRC 17002 / CCUG 31169 / CIP 107868 / KCTC 3260 / NRRL B-441) (Lactobacillus paracasei), this protein is UPF0473 protein LSEI_0788.